The chain runs to 550 residues: MFCVQCEQTIRTPAGNGCSYAQGMCGKTAETSDLQDLLIAALQGLSAWAVKAREYGIINHDVDNFAPRAFFSTLTNVNFDSPRIVGYARDAIAMREALKAQCLSVDANAHCDNPMADLQLVSDDLGELQRQAAEFTPNKDKAAIGENILGLRLLCLYGLKGAAAYMEHAHVLGQYDNDIYAQYHKIMAWLGTWPADMNALLECAMEIGQMNFKVMSILDAGETTKYGHPTPTQVNVKATEGKCILISGHDLKDLYNLLEQTEGTGVNVYTHGEMLPAHGYPELRKFKHLVGNYGSGWQNQQVEFARFPGPIVMTSNCIIDPTVGSYDDRIWTRSIVGWPGVSHLEGDDFGPVIAQAQQMAGFPYSEIPHLITVGFGRQTLLGAADTLIDLVSREKLRHIFLVGGCDGARGERNYFTDFVTSVPDDCLILTLACGKYRFNKLEFGDIEGLPRLVDAGQCNDAYSAIILAVTLAEKLGCGVNDLPLSLVLSWFEQKAIVILLTLLSLGVKNIVTGPTAPGFFTPDLLAILNEKFGLRSVTTVEEDMKQLLSA.

[2Fe-2S] cluster contacts are provided by C3, C6, C18, and C25. The hybrid [4Fe-2O-2S] cluster site is built by H249, E273, C317, C405, C433, C458, E492, and K494. Cysteine persulfide is present on C405.

The protein belongs to the HCP family. [2Fe-2S] cluster is required as a cofactor. It depends on hybrid [4Fe-2O-2S] cluster as a cofactor.

It localises to the cytoplasm. The enzyme catalyses A + NH4(+) + H2O = hydroxylamine + AH2 + H(+). Functionally, catalyzes the reduction of hydroxylamine to form NH(3) and H(2)O. This chain is Hydroxylamine reductase, found in Salmonella typhi.